The chain runs to 227 residues: Ubiquitin domain-containing protein 1 (227 aa).

Residues 1 to 14 (MGGCVGRERAETRG) show a composition bias toward basic and acidic residues. The segment at 1-45 (MGGCVGRERAETRGRGSRTQRKRGGRNEPLKKDKPKWKSDYPMTE) is disordered. Over residues 15 to 24 (RGSRTQRKRG) the composition is skewed to basic residues. The segment covering 25 to 39 (GRNEPLKKDKPKWKS) has biased composition (basic and acidic residues). Residues 150–225 (FQLKVRLSTG…IQVIVNQPAP (76 aa)) enclose the Ubiquitin-like domain.

May be involved in the regulation of cellular senescence through a positive feedback loop with TP53. The polypeptide is Ubiquitin domain-containing protein 1 (ubtd1) (Danio rerio (Zebrafish)).